Here is a 289-residue protein sequence, read N- to C-terminus: Serine/threonine-protein phosphatase Pgam5, mitochondrial (289 aa).

Residues 7–23 (FACGTGAGLAAYYLQKL) form a helical membrane-spanning segment.

This sequence belongs to the phosphoglycerate mutase family. BPG-dependent PGAM subfamily. Interacts with Pk92B/ASK1.

Its subcellular location is the mitochondrion outer membrane. The catalysed reaction is O-phospho-L-seryl-[protein] + H2O = L-seryl-[protein] + phosphate. It catalyses the reaction O-phospho-L-threonyl-[protein] + H2O = L-threonyl-[protein] + phosphate. In terms of biological role, displays phosphatase activity for serine/threonine residues, and dephosphorylates and activates Pk92B kinase. Has apparently no phosphoglycerate mutase activity. The sequence is that of Serine/threonine-protein phosphatase Pgam5, mitochondrial from Drosophila virilis (Fruit fly).